Consider the following 302-residue polypeptide: N-acetyl-D-glucosamine kinase (302 aa).

ATP-binding positions include 4–11 (GFDIGGTK) and 133–139 (GGGGLVL). The Zn(2+) site is built by histidine 156, cysteine 176, cysteine 178, and cysteine 183.

This sequence belongs to the ROK (NagC/XylR) family. NagK subfamily.

The catalysed reaction is N-acetyl-D-glucosamine + ATP = N-acetyl-D-glucosamine 6-phosphate + ADP + H(+). The protein operates within cell wall biogenesis; peptidoglycan recycling. In terms of biological role, catalyzes the phosphorylation of N-acetyl-D-glucosamine (GlcNAc) derived from cell-wall degradation, yielding GlcNAc-6-P. This is N-acetyl-D-glucosamine kinase from Salmonella typhi.